The following is a 541-amino-acid chain: Glucose-6-phosphate isomerase (541 aa).

The Proton donor role is filled by glutamate 346. Residues histidine 377 and lysine 506 contribute to the active site.

Belongs to the GPI family.

Its subcellular location is the cytoplasm. It catalyses the reaction alpha-D-glucose 6-phosphate = beta-D-fructose 6-phosphate. The protein operates within carbohydrate biosynthesis; gluconeogenesis. It participates in carbohydrate degradation; glycolysis; D-glyceraldehyde 3-phosphate and glycerone phosphate from D-glucose: step 2/4. Functionally, catalyzes the reversible isomerization of glucose-6-phosphate to fructose-6-phosphate. In Rhizobium johnstonii (strain DSM 114642 / LMG 32736 / 3841) (Rhizobium leguminosarum bv. viciae), this protein is Glucose-6-phosphate isomerase.